A 211-amino-acid polypeptide reads, in one-letter code: Redox-sensing transcriptional repressor Rex (211 aa).

Positions 18 to 57 form a DNA-binding region, H-T-H motif; that stretch reads LYYRFLENLHASGKQRVSSSELSEAVKVDSATIRRDFSYF. Residue 92 to 97 participates in NAD(+) binding; it reads GVGNLG.

The protein belongs to the transcriptional regulatory Rex family. Homodimer.

The protein resides in the cytoplasm. Modulates transcription in response to changes in cellular NADH/NAD(+) redox state. In Halalkalibacterium halodurans (strain ATCC BAA-125 / DSM 18197 / FERM 7344 / JCM 9153 / C-125) (Bacillus halodurans), this protein is Redox-sensing transcriptional repressor Rex.